The sequence spans 326 residues: Probable fructokinase-4 (326 aa).

This sequence belongs to the carbohydrate kinase PfkB family.

The catalysed reaction is D-fructose + ATP = D-fructose 6-phosphate + ADP + H(+). It functions in the pathway glycan biosynthesis; starch biosynthesis. Its function is as follows. May play an important role in maintaining the flux of carbon towards starch formation. This is Probable fructokinase-4 from Arabidopsis thaliana (Mouse-ear cress).